Consider the following 863-residue polypeptide: Dipeptidyl peptidase 9 (863 aa).

The segment at 1 to 20 is disordered; it reads MATTGTPTADRGDAAATDDP. Position 2 is an N-acetylalanine (Ala-2). Active-site charge relay system residues include Ser-730, Asp-808, and His-840. Ser-730 lines the Val-boroPro pocket.

Belongs to the peptidase S9B family. DPPIV subfamily. In terms of assembly, homodimer. Forms a ternary complex with NLRP1, composed of a DPP9 homodimer, one full-length NLRP1 protein, and one cleaved C-terminus of NLRP1 (NACHT, LRR and PYD domains-containing protein 1, C-terminus). Forms a ternary complex with CARD8, composed of a DPP9 homodimer, one full-length NLRP1 protein, and one cleaved C-terminus of CARD8 (Caspase recruitment domain-containing protein 8, C-terminus). In the ternary complex, only one subunit of the DPP9 homodimer is bound to NLRP1 or CARD8. Ubiquitously expressed, with highest levels in liver, heart and muscle, and lowest levels in brain.

Its subcellular location is the cytoplasm. It localises to the cytosol. The protein resides in the nucleus. It catalyses the reaction Release of an N-terminal dipeptide, Xaa-Yaa-|-Zaa-, from a polypeptide, preferentially when Yaa is Pro, provided Zaa is neither Pro nor hydroxyproline.. With respect to regulation, inhibited by the serine proteinase inhibitor 4-(2-aminoethyl)benzenesulphonyl fluoride (AEBSF), and by di-isopropylfluorophosphate. Inhibited by Val-boroPro (Talabostat, PT-100), a non-selective inhibitor, which triggers pyroptosis in monocytes and macrophages. Val-boroPro inhibits activity by binding to the active site, mimicking a substrate-bound state, thereby displacing the C-terminal fragment of NLRP1, leading to activation of the NLRP1 inflammasome. In contrast, Val-boroPro does not directly displaces CARD8: it acts by promoting degradation of the N-terminal part of CARD8, leading to indirect disruption of the ternary complex. Chemical inhibition of DPP9 by Val-boroPro in HIV-1-infected cells activates the CARD8 inflammasome, triggering cell death, offering a promising strategy for the elimination of HIV-1 reservoirs in people living with HIV-1. Functionally, dipeptidyl peptidase that cleaves off N-terminal dipeptides from proteins having a Pro or Ala residue at position 2. Acts as a key inhibitor of caspase-1-dependent monocyte and macrophage pyroptosis in resting cells by preventing activation of NLRP1 and CARD8. Sequesters the cleaved C-terminal part of NLRP1 and CARD8, which respectively constitute the active part of the NLRP1 and CARD8 inflammasomes, in a ternary complex, thereby preventing their oligomerization and activation. The dipeptidyl peptidase activity is required to suppress NLRP1 and CARD8; however, neither NLRP1 nor CARD8 are bona fide substrates of DPP9, suggesting the existence of substrate(s) required for NLRP1 and CARD8 inhibition. In Homo sapiens (Human), this protein is Dipeptidyl peptidase 9.